The following is a 95-amino-acid chain: Small ribosomal subunit protein bS18 (95 aa).

The protein belongs to the bacterial ribosomal protein bS18 family. As to quaternary structure, part of the 30S ribosomal subunit. Forms a tight heterodimer with protein bS6.

In terms of biological role, binds as a heterodimer with protein bS6 to the central domain of the 16S rRNA, where it helps stabilize the platform of the 30S subunit. This Acidiphilium cryptum (strain JF-5) protein is Small ribosomal subunit protein bS18.